Here is a 256-residue protein sequence, read N- to C-terminus: 4-hydroxy-tetrahydrodipicolinate reductase (256 aa).

8–13 (GATGRV) is a binding site for NAD(+). Residue K36 coordinates NADP(+). NAD(+) contacts are provided by residues 89-91 (GTT) and 113-116 (ATNM). Residue H145 is the Proton donor/acceptor of the active site. H146 contacts (S)-2,3,4,5-tetrahydrodipicolinate. The Proton donor role is filled by K149. Position 155-156 (155-156 (GT)) interacts with (S)-2,3,4,5-tetrahydrodipicolinate.

It belongs to the DapB family.

It is found in the cytoplasm. The enzyme catalyses (S)-2,3,4,5-tetrahydrodipicolinate + NAD(+) + H2O = (2S,4S)-4-hydroxy-2,3,4,5-tetrahydrodipicolinate + NADH + H(+). It carries out the reaction (S)-2,3,4,5-tetrahydrodipicolinate + NADP(+) + H2O = (2S,4S)-4-hydroxy-2,3,4,5-tetrahydrodipicolinate + NADPH + H(+). Its pathway is amino-acid biosynthesis; L-lysine biosynthesis via DAP pathway; (S)-tetrahydrodipicolinate from L-aspartate: step 4/4. In terms of biological role, catalyzes the conversion of 4-hydroxy-tetrahydrodipicolinate (HTPA) to tetrahydrodipicolinate. This chain is 4-hydroxy-tetrahydrodipicolinate reductase, found in Wolinella succinogenes (strain ATCC 29543 / DSM 1740 / CCUG 13145 / JCM 31913 / LMG 7466 / NCTC 11488 / FDC 602W) (Vibrio succinogenes).